The sequence spans 109 residues: uncharacterized protein (109 aa).

An N-terminal signal peptide occupies residues 1-23 (MKNYNFILISLFIIFFIILNISS). N-linked (GlcNAc...) asparagine glycosylation is present at Asn-27. Residues 45–109 (YQEYMENRTP…KKDQQNQQQN (65 aa)) are disordered. Residues 54–72 (PNEQQQQQQQQQNNNNPPQ) show a composition bias toward low complexity. Basic and acidic residues predominate over residues 94–103 (KLKEKLKKDQ).

It localises to the secreted. This is an uncharacterized protein from Dictyostelium discoideum (Social amoeba).